The sequence spans 328 residues: Octanoyltransferase, mitochondrial (328 aa).

The BPL/LPL catalytic domain maps to 108-312 (MKPNPIILTF…EMTKLLGIKT (205 aa)). Residues 162–169 (RGGQVTFH), 241–243 (SVG), and 254–256 (GVA) contribute to the substrate site. Cysteine 272 functions as the Acyl-thioester intermediate in the catalytic mechanism.

The protein belongs to the LipB family.

Its subcellular location is the mitochondrion. It carries out the reaction octanoyl-[ACP] + L-lysyl-[protein] = N(6)-octanoyl-L-lysyl-[protein] + holo-[ACP] + H(+). It participates in protein modification; protein lipoylation via endogenous pathway; protein N(6)-(lipoyl)lysine from octanoyl-[acyl-carrier-protein]: step 1/2. Catalyzes the transfer of endogenously produced octanoic acid from octanoyl-acyl-carrier-protein onto the lipoyl domains of lipoate-dependent enzymes. Lipoyl-ACP can also act as a substrate although octanoyl-ACP is likely to be the physiological substrate. This is Octanoyltransferase, mitochondrial (LIP2) from Saccharomyces cerevisiae (strain ATCC 204508 / S288c) (Baker's yeast).